We begin with the raw amino-acid sequence, 501 residues long: O-phosphoseryl-tRNA(Sec) selenium transferase (501 aa).

The interval 1-44 (MNRESFAAGERLVSPAYVRQGCEARRSHEHLIRLLLEKGKCPEN) is tetramerization. Ser-14 carries the post-translational modification Phosphoserine. Pyridoxal 5'-phosphate is bound at residue Arg-75. The interval 96–106 (GRSGDISAVQP) is phosphate loop (P-loop). 3 residues coordinate substrate: Arg-97, Ser-98, and Gln-105. A tRNA-binding site is contributed by Arg-271. The residue at position 284 (Lys-284) is an N6-(pyridoxal phosphate)lysine. Substrate is bound at residue Arg-313. TRNA-binding residues include Arg-398 and Lys-463. An SLA/LP epitope region spans residues 474-493 (DKTEDVDIEEMALKLDNVLL).

The protein belongs to the SepSecS family. Homotetramer formed by a catalytic dimer and a non-catalytic dimer serving as a binding platform that orients tRNASec for catalysis. Each tetramer binds the CCA ends of two tRNAs which point to the active sites of the catalytic dimer. Requires pyridoxal 5'-phosphate as cofactor. Primarily expressed in liver, pancreas, kidney and lung. Overexpressed in PHA-stimulated T-cells.

The protein localises to the cytoplasm. It catalyses the reaction O-phospho-L-seryl-tRNA(Sec) + selenophosphate + H2O = L-selenocysteinyl-tRNA(Sec) + 2 phosphate. It participates in aminoacyl-tRNA biosynthesis; selenocysteinyl-tRNA(Sec) biosynthesis; selenocysteinyl-tRNA(Sec) from L-seryl-tRNA(Sec) (archaeal/eukaryal route): step 2/2. Functionally, converts O-phosphoseryl-tRNA(Sec) to selenocysteinyl-tRNA(Sec) required for selenoprotein biosynthesis. This is O-phosphoseryl-tRNA(Sec) selenium transferase (SEPSECS) from Homo sapiens (Human).